A 208-amino-acid polypeptide reads, in one-letter code: Small ribosomal subunit protein uS5 (208 aa).

A compositionally biased stretch (polar residues) spans methionine 1 to alanine 19. A disordered region spans residues methionine 1 to glutamate 54. 2 stretches are compositionally biased toward basic and acidic residues: residues glycine 25–arginine 37 and arginine 44–glutamate 54. An S5 DRBM domain is found at tryptophan 52–valine 115.

The protein belongs to the universal ribosomal protein uS5 family. Part of the 30S ribosomal subunit. Contacts proteins S4 and S8.

Its function is as follows. With S4 and S12 plays an important role in translational accuracy. Located at the back of the 30S subunit body where it stabilizes the conformation of the head with respect to the body. The sequence is that of Small ribosomal subunit protein uS5 from Prochlorococcus marinus (strain NATL1A).